The chain runs to 82 residues: MTELTINHTLDTLGLRCPEPVMLTRKTIRNMADGEVLLIIADDPATTRDIPSFCQFMDHQLLKSQTDTKPYQYWVKKGLDHL.

The active-site Cysteine persulfide intermediate is the Cys17.

It belongs to the sulfur carrier protein TusA family.

The protein localises to the cytoplasm. Sulfur carrier protein which probably makes part of a sulfur-relay system. The protein is Sulfur carrier protein TusA of Glaesserella parasuis serovar 5 (strain SH0165) (Haemophilus parasuis).